Reading from the N-terminus, the 208-residue chain is Protein late bloomer (208 aa).

Helical transmembrane passes span 10–30 (IASIVLNAVLGFLAAGAIGWI), 41–61 (FVIAAYIACSLILVFALLGIF), 67–87 (SVVLTATSAVFLLILAILQIV), and 174–194 (FIIVSWVLVAFELICFALAVF).

The protein belongs to the tetraspanin (TM4SF) family. As to expression, transiently expressed on motor axons, growth cones and terminal arbors.

The protein localises to the membrane. The protein resides in the synapse. In terms of biological role, facilitates synapse formation. This Drosophila melanogaster (Fruit fly) protein is Protein late bloomer (lbm).